Here is a 416-residue protein sequence, read N- to C-terminus: Adenylosuccinate synthetase (416 aa).

Residues glycine 12–lysine 18 and glycine 40–threonine 42 contribute to the GTP site. Aspartate 13 acts as the Proton acceptor in catalysis. Mg(2+)-binding residues include aspartate 13 and glycine 40. Residues aspartate 13 to lysine 16, asparagine 38 to histidine 41, threonine 125, arginine 139, glutamine 220, threonine 235, and arginine 299 contribute to the IMP site. The active-site Proton donor is the histidine 41. Threonine 295–arginine 301 lines the substrate pocket. Residues arginine 301, lysine 327 to aspartate 329, and serine 405 to serine 407 contribute to the GTP site.

This sequence belongs to the adenylosuccinate synthetase family. Homodimer. Mg(2+) serves as cofactor.

It localises to the cytoplasm. The catalysed reaction is IMP + L-aspartate + GTP = N(6)-(1,2-dicarboxyethyl)-AMP + GDP + phosphate + 2 H(+). It participates in purine metabolism; AMP biosynthesis via de novo pathway; AMP from IMP: step 1/2. Its function is as follows. Plays an important role in the de novo pathway of purine nucleotide biosynthesis. Catalyzes the first committed step in the biosynthesis of AMP from IMP. The chain is Adenylosuccinate synthetase from Nitratiruptor sp. (strain SB155-2).